The sequence spans 312 residues: Malate dehydrogenase (312 aa).

Residues 10–15 (GAGNTG) and aspartate 34 contribute to the NAD(+) site. Substrate-binding residues include arginine 85 and arginine 91. Residues asparagine 98 and 121-123 (LTN) each bind NAD(+). The substrate site is built by asparagine 123 and arginine 154. Histidine 178 functions as the Proton acceptor in the catalytic mechanism.

It belongs to the LDH/MDH superfamily. MDH type 3 family.

The catalysed reaction is (S)-malate + NAD(+) = oxaloacetate + NADH + H(+). Functionally, catalyzes the reversible oxidation of malate to oxaloacetate. The protein is Malate dehydrogenase of Staphylococcus saprophyticus subsp. saprophyticus (strain ATCC 15305 / DSM 20229 / NCIMB 8711 / NCTC 7292 / S-41).